The sequence spans 385 residues: GDP-mannose-dependent alpha-(1-6)-phosphatidylinositol monomannoside mannosyltransferase (385 aa).

The GDP-alpha-D-mannose site is built by Arg205, Lys210, Val262, and Glu299.

This sequence belongs to the glycosyltransferase group 1 family. Glycosyltransferase 4 subfamily.

The catalysed reaction is a 1,2-diacyl-sn-glycero-3-phospho-[alpha-D-mannopyranosyl-(1&lt;-&gt;6)-D-myo-inositol] + GDP-alpha-D-mannose = a 2,6-O-bis(alpha-D-mannopyranosyl)-1-phosphatidyl-1D-myo-inositol + GDP + H(+). The enzyme catalyses a 1,2-diacyl-sn-glycero-3-phospho-[alpha-D-6-acyl-mannopyranosyl-(1&lt;-&gt;6)-D-myo-inositol] + GDP-alpha-D-mannose = a 2-O-(alpha-D-mannosyl)-6-O-(6-O-acyl-alpha-D-mannosyl)-1-phosphatidyl-1D-myo-inositol + GDP + H(+). The protein operates within phospholipid metabolism; phosphatidylinositol metabolism. Its function is as follows. Involved in the biosynthesis of phosphatidyl-myo-inositol mannosides (PIM) which are early precursors in the biosynthesis of lipomannans (LM) and lipoarabinomannans (LAM). Catalyzes the addition of a mannosyl residue from GDP-D-mannose (GDP-Man) to the position 6 of a phosphatidyl-myo-inositol bearing an alpha-1,2-linked mannose residue (PIM1) to generate phosphatidyl-myo-inositol bearing alpha-1,2- and alpha-1,6-linked mannose residues (Ac1PIM2). PimB also catalyzes the addition of a mannosyl residue from GDP-Man to the position 6 of phosphatidyl-myo-inositol bearing an acylated alpha-1,2-linked mannose residue (Ac1PIM1) to generate monoacylated phosphatidyl-myo-inositol bearing alpha-1,2- and alpha-1,6-linked mannose residues (Ac1PIM2). The addition of the second mannosyl residue by PimB preferentially occurs before the acylation of the mannosyl residue transferred by PimA. Also able to transfer a mannosyl residue from GDP-Man to the position 6 of a phosphatidyl-myo-inositol (PI), but this reaction is very slow. The chain is GDP-mannose-dependent alpha-(1-6)-phosphatidylinositol monomannoside mannosyltransferase from Mycobacterium tuberculosis (strain CDC 1551 / Oshkosh).